We begin with the raw amino-acid sequence, 489 residues long: MAAAAARVVLSSAARRRLWGFSESLLIRGAAGRSLYFGENRLRSTQAATQVVLNVPETRVTCLESGLRVASEDSGLSTCTVGLWIDAGSRYENEKNNGTAHFLEHMAFKGTKKRSQLDLELEIENMGAHLNAYTSREQTVYYAKAFSKDLPRAVEILADIIQNSTLGEAEIERERGVILREMQEVETNLQEVVFDYLHATAYQNTALGRTILGPTENIKSISRKDLVDYITTHYKGPRIVLAAAGGVSHDELLDLAKFHFGDSLCTHKGEIPALPPCKFTGSEIRVRDDKMPLAHLAIAVEAVGWAHPDTICLMVANTLIGNWDRSFGGGMNLSSKLAQLTCHGNLCHSFQSFNTSYTDTGLWGLYMVCESSTVADMLHVVQKEWMRLCTSVTESEVARARNLLKTNMLLQLDGSTPICEDIGRQMLCYNRRIPIPELEARIDAVNAETIREVCTKYIYNRSPAIAAVGPIKQLPDFKQIRSNMCWLRD.

The N-terminal 43 residues, 1–43 (MAAAAARVVLSSAARRRLWGFSESLLIRGAAGRSLYFGENRLR), are a transit peptide targeting the mitochondrion. His-101 is a Zn(2+) binding site. The Proton acceptor role is filled by Glu-104. His-105 and Glu-181 together coordinate Zn(2+).

It belongs to the peptidase M16 family. In terms of assembly, heterodimer of PMPCA (alpha) and PMPCB (beta) subunits, forming the mitochondrial processing protease (MPP) in which PMPCA is involved in substrate recognition and binding and PMPCB is the catalytic subunit. Zn(2+) serves as cofactor.

The protein localises to the mitochondrion matrix. The enzyme catalyses Release of N-terminal transit peptides from precursor proteins imported into the mitochondrion, typically with Arg in position P2.. Its activity is regulated as follows. Binding to PMPCA is required for catalytic activity. In terms of biological role, catalytic subunit of the essential mitochondrial processing protease (MPP), which cleaves the mitochondrial sequence off newly imported precursors proteins. Preferentially, cleaves after an arginine at position P2. Required for PINK1 turnover by coupling PINK1 mitochondrial import and cleavage, which results in subsequent PINK1 proteolysis. In Homo sapiens (Human), this protein is Mitochondrial-processing peptidase subunit beta (PMPCB).